A 511-amino-acid polypeptide reads, in one-letter code: 2-isopropylmalate synthase (511 aa).

The 264-residue stretch at 6–269 folds into the Pyruvate carboxyltransferase domain; it reads IIIFDTTLRD…YTDIKCENIF (264 aa). Mn(2+)-binding residues include Asp-15, His-203, His-205, and Asn-239. A regulatory domain region spans residues 394–511; the sequence is VLEKLSVISG…SLKVEERKMA (118 aa).

It belongs to the alpha-IPM synthase/homocitrate synthase family. LeuA type 1 subfamily. Homodimer. It depends on Mn(2+) as a cofactor.

It localises to the cytoplasm. The catalysed reaction is 3-methyl-2-oxobutanoate + acetyl-CoA + H2O = (2S)-2-isopropylmalate + CoA + H(+). It functions in the pathway amino-acid biosynthesis; L-leucine biosynthesis; L-leucine from 3-methyl-2-oxobutanoate: step 1/4. Functionally, catalyzes the condensation of the acetyl group of acetyl-CoA with 3-methyl-2-oxobutanoate (2-ketoisovalerate) to form 3-carboxy-3-hydroxy-4-methylpentanoate (2-isopropylmalate). In Campylobacter jejuni subsp. jejuni serotype O:2 (strain ATCC 700819 / NCTC 11168), this protein is 2-isopropylmalate synthase.